The primary structure comprises 442 residues: Proline--tRNA ligase (442 aa).

Belongs to the class-II aminoacyl-tRNA synthetase family. ProS type 2 subfamily. Homodimer.

It localises to the cytoplasm. The enzyme catalyses tRNA(Pro) + L-proline + ATP = L-prolyl-tRNA(Pro) + AMP + diphosphate. Its function is as follows. Catalyzes the attachment of proline to tRNA(Pro) in a two-step reaction: proline is first activated by ATP to form Pro-AMP and then transferred to the acceptor end of tRNA(Pro). This chain is Proline--tRNA ligase, found in Brucella ovis (strain ATCC 25840 / 63/290 / NCTC 10512).